Consider the following 454-residue polypeptide: V-type ATP synthase subunit I 2 (454 aa).

The tract at residues 101–121 (EREGDAPSVPRGKSSVAHDSA) is disordered. 4 consecutive transmembrane segments (helical) span residues 254–274 (LLFG…VLGL), 293–313 (VFLS…EFFA), 351–371 (MAFF…GLII), and 424–444 (ACLS…SVCV).

It belongs to the V-ATPase 116 kDa subunit family.

The protein localises to the cell membrane. In terms of biological role, produces ATP from ADP in the presence of a proton gradient across the membrane. This Treponema pallidum (strain Nichols) protein is V-type ATP synthase subunit I 2 (atpI2).